We begin with the raw amino-acid sequence, 78 residues long: Large ribosomal subunit protein bL28 (78 aa).

It belongs to the bacterial ribosomal protein bL28 family.

This chain is Large ribosomal subunit protein bL28, found in Escherichia coli O139:H28 (strain E24377A / ETEC).